The chain runs to 748 residues: Polyribonucleotide nucleotidyltransferase (748 aa).

Mg(2+) is bound by residues aspartate 487 and aspartate 493. A KH domain is found at 554-613 (PSTTTIKIDKDKIRDIIGPGGKVIKEICETSGAKIDISDDGTVSVYASDRDKLKVALDKI). The 69-residue stretch at 623–691 (GEIFNGTVVK…NKGKAKLTIK (69 aa)) folds into the S1 motif domain. Residues 695–733 (KDKFSNNTKPKTSVNNTKDNSEPEQRHDSSKKRAWNEDN) form a disordered region. Polar residues predominate over residues 699-712 (SNNTKPKTSVNNTK). The segment covering 713 to 722 (DNSEPEQRHD) has biased composition (basic and acidic residues).

This sequence belongs to the polyribonucleotide nucleotidyltransferase family. Requires Mg(2+) as cofactor.

Its subcellular location is the cytoplasm. It carries out the reaction RNA(n+1) + phosphate = RNA(n) + a ribonucleoside 5'-diphosphate. Its function is as follows. Involved in mRNA degradation. Catalyzes the phosphorolysis of single-stranded polyribonucleotides processively in the 3'- to 5'-direction. The polypeptide is Polyribonucleotide nucleotidyltransferase (Rickettsia rickettsii (strain Iowa)).